A 141-amino-acid chain; its full sequence is Nucleoside diphosphate kinase (141 aa).

The ATP site is built by lysine 11, phenylalanine 59, arginine 87, threonine 93, arginine 104, and asparagine 114. The active-site Pros-phosphohistidine intermediate is histidine 117.

The protein belongs to the NDK family. In terms of assembly, homotetramer. Mg(2+) is required as a cofactor.

The protein localises to the cytoplasm. It catalyses the reaction a 2'-deoxyribonucleoside 5'-diphosphate + ATP = a 2'-deoxyribonucleoside 5'-triphosphate + ADP. The enzyme catalyses a ribonucleoside 5'-diphosphate + ATP = a ribonucleoside 5'-triphosphate + ADP. Major role in the synthesis of nucleoside triphosphates other than ATP. The ATP gamma phosphate is transferred to the NDP beta phosphate via a ping-pong mechanism, using a phosphorylated active-site intermediate. The polypeptide is Nucleoside diphosphate kinase (Cupriavidus taiwanensis (strain DSM 17343 / BCRC 17206 / CCUG 44338 / CIP 107171 / LMG 19424 / R1) (Ralstonia taiwanensis (strain LMG 19424))).